Here is a 170-residue protein sequence, read N- to C-terminus: Tubulin polymerization-promoting protein family member 2 (170 aa).

The disordered stretch occupies residues 127-147 (TGTHKERFDESGKGKGIAGRE). Residues 129-139 (THKERFDESGK) are compositionally biased toward basic and acidic residues.

The protein belongs to the TPPP family.

It localises to the cytoplasm. It is found in the cytosol. The protein resides in the cell projection. Its subcellular location is the cilium. The protein localises to the flagellum. Functionally, probable regulator of microtubule dynamics required for sperm motility. In contrast to other members of the family, has no microtubule bundling activity. The polypeptide is Tubulin polymerization-promoting protein family member 2 (TPPP2) (Macaca fascicularis (Crab-eating macaque)).